A 514-amino-acid polypeptide reads, in one-letter code: Putative exoglucanase type C (514 aa).

An N-terminal signal peptide occupies residues 1-17 (MYRIVATASALIAAARA). A catalytic region spans residues 18–439 (QQVCSLNTET…RDVPNSKVSF (422 aa)). Catalysis depends on E229, which acts as the Nucleophile. The active-site Proton donor is the E234. N-linked (GlcNAc...) asparagine glycosylation occurs at N287. The segment covering 408–424 (STKVGSQRGSCATTSGK) has biased composition (polar residues). Disordered stretches follow at residues 408–433 (STKVGSQRGSCATTSGKPSDLERDVP) and 448–485 (GSTYKSDGTTPNPPASSSTTGSSTPTNPPAGSVDQWGQ). Residues 440-482 (SNIKFGPIGSTYKSDGTTPNPPASSSTTGSSTPTNPPAGSVDQ) are linker. Over residues 462–479 (ASSSTTGSSTPTNPPAGS) the composition is skewed to low complexity. The region spanning 478–514 (GSVDQWGQCGGQNYSGPTTCKSPFTCKKINDFYSQCQ) is the CBM1 domain. Disulfide bonds link C486–C503 and C497–C513. N490 is a glycosylation site (N-linked (GlcNAc...) asparagine).

This sequence belongs to the glycosyl hydrolase 7 (cellulase C) family.

The enzyme catalyses Hydrolysis of (1-&gt;4)-beta-D-glucosidic linkages in cellulose and cellotetraose, releasing cellobiose from the non-reducing ends of the chains.. This chain is Putative exoglucanase type C, found in Fusarium oxysporum (Fusarium vascular wilt).